Consider the following 801-residue polypeptide: Probable phosphoketolase (801 aa).

It belongs to the XFP family. Thiamine diphosphate serves as cofactor.

The sequence is that of Probable phosphoketolase from Bradyrhizobium diazoefficiens (strain JCM 10833 / BCRC 13528 / IAM 13628 / NBRC 14792 / USDA 110).